A 610-amino-acid chain; its full sequence is Glutamine--fructose-6-phosphate aminotransferase [isomerizing] (610 aa).

C2 serves as the catalytic Nucleophile; for GATase activity. Residues 2 to 220 (CGIISAISKK…EGDIAILSHK (219 aa)) form the Glutamine amidotransferase type-2 domain. 2 SIS domains span residues 289–429 (AHAL…LKTN) and 461–600 (LAKE…IDKP). The For Fru-6P isomerization activity role is filled by K605.

As to quaternary structure, homodimer.

The protein localises to the cytoplasm. It carries out the reaction D-fructose 6-phosphate + L-glutamine = D-glucosamine 6-phosphate + L-glutamate. In terms of biological role, catalyzes the first step in hexosamine metabolism, converting fructose-6P into glucosamine-6P using glutamine as a nitrogen source. In Buchnera aphidicola subsp. Baizongia pistaciae (strain Bp), this protein is Glutamine--fructose-6-phosphate aminotransferase [isomerizing].